The chain runs to 491 residues: Zinc finger protein 655 (491 aa).

Residues 1–52 are disordered; that stretch reads MEEIPAQEAAGSPRVQFQSLETQSECLSPEPQFVQDTDMEQGLTGDGETREE. Polar residues predominate over residues 15-26; sequence VQFQSLETQSEC. Phosphoserine is present on Q60. Glycyl lysine isopeptide (Lys-Gly) (interchain with G-Cter in SUMO2) cross-links involve residues K77, K190, and K201. 6 consecutive C2H2-type zinc fingers follow at residues 212-234, 240-262, 303-325, 330-353, 380-402, and 408-430; these read YKCD…QRIH, YKCK…KRIH, YKCS…QKIH, CKCT…RVHH, YTCS…QRIH, and HECN…HKMH.

This sequence belongs to the krueppel C2H2-type zinc-finger protein family. As to quaternary structure, interacts with VAV1 and CDK4. Interacts with INTS13; promoting association with the integrator complex.

The protein localises to the nucleus. In terms of biological role, probable transcription factor. The protein is Zinc finger protein 655 of Homo sapiens (Human).